Consider the following 696-residue polypeptide: Mitosis initiation protein fs(1)Ya (696 aa).

Disordered regions lie at residues 245 to 285, 336 to 379, and 457 to 492; these read NAST…RAWK, EHSS…YSTS, and IKFETPPKSSQQMRSNGEGDETKDQFFTPEPGTPEI. Low complexity-rich tracts occupy residues 270-281 and 361-379; these read QQQQQQQQPLQQ and SESSASEVNSGSSSSYSTS. A rich in charged AA region spans residues 448–696; the sequence is TGAGINKKQI…REPIERMRRQ (249 aa). Residues Thr-478, Thr-484, and Thr-489 each carry the phosphothreonine modification. 2 consecutive short sequence motifs (nuclear localization signal) follow at residues 512 to 520 and 534 to 538; these read PKKDKPKEK and QPRVR. Disordered regions lie at residues 555–586 and 603–696; these read DVGEPEVVDAEEEDEVFRPTNASTCNDKKLEA and PASL…MRRQ. The segment covering 557–569 has biased composition (acidic residues); it reads GEPEVVDAEEEDE. 2 stretches are compositionally biased toward basic and acidic residues: residues 607–624 and 685–696; these read RGEREKDRDRDRDSDKEN and RPREPIERMRRQ.

The protein localises to the nucleus envelope. The protein resides in the nucleus. It localises to the nucleoplasm. Its subcellular location is the cytoplasm. Its function is as follows. Cell cycle-dependent nuclear envelope component required for embryonic mitosis. This is Mitosis initiation protein fs(1)Ya (fs(1)Ya) from Drosophila melanogaster (Fruit fly).